The following is a 1373-amino-acid chain: Poly(A) RNA polymerase gld-2 homolog B (1373 aa).

Residues 75 to 91 (NSCHSSNSSSNTSNNNN) show a composition bias toward low complexity. Disordered stretches follow at residues 75–155 (NSCH…QEKQ), 175–340 (SDCK…FWKT), 425–543 (PDST…QQQK), 734–770 (PQQQ…FADG), 802–866 (CGSG…ALGS), and 880–928 (HPLH…PTPV). Positions 96-112 (GQQQQPLHYCNSNNSHS) are enriched in polar residues. Composition is skewed to low complexity over residues 130–152 (QQQQ…QMQQ), 180–219 (SDSN…SCSN), 228–251 (NENS…NTSS), and 274–284 (ESGSSEGAAES). Composition is skewed to polar residues over residues 295–340 (CNSN…FWKT) and 430–442 (KSSS…NMIR). Low complexity predominate over residues 443 to 485 (SSSNGNSNFSRHQYGHQSTGSGYQQQQQRYRNAQNVYQQYQHQ). Residues 486-502 (QQHHAQQHTHPHFRRKH) show a composition bias toward basic residues. Composition is skewed to low complexity over residues 735-753 (QQQQ…GTSS) and 819-844 (AGAL…SGTS). Polar residues predominate over residues 855 to 866 (PSISPTPSALGS). The segment covering 880–890 (HPLHQQHPPSH) has biased composition (low complexity). Residues 945 to 1373 (RYLAQARNIE…FAETTAAHVA (429 aa)) are sufficent for interaction with Dcr-2. Mg(2+)-binding residues include Asp1029 and Asp1031. The PAP-associated domain occupies 1211–1272 (TLGEHLLGFF…NIEEPFDLSN (62 aa)). Positions 1320 to 1341 (LQQHQQQFEQQLHHPISGQQRS) are enriched in low complexity. The segment at 1320-1359 (LQQHQQQFEQQLHHPISGQQRSAGGGGDGANPVPSTLNPD) is disordered.

It belongs to the DNA polymerase type-B-like family. GLD2 subfamily. In terms of assembly, interacts with orb, an RNA-binding protein, generating an ovarian cytoplasmic polyadenylation complex. Interacts (via C-terminus) with Dcr-2. The cofactor is Mg(2+). Mn(2+) is required as a cofactor. In terms of tissue distribution, expressed in ovaries. Not expressed in adult males.

It localises to the cytoplasm. The catalysed reaction is RNA(n) + ATP = RNA(n)-3'-adenine ribonucleotide + diphosphate. Its function is as follows. Cytoplasmic poly(A) RNA polymerase that adds successive AMP monomers to the 3'-end of specific maternal RNAs (bcd, Tl, and tor), forming a poly(A) tail, during late oogenesis and early embryogenesis. In contrast to the canonical nuclear poly(A) RNA polymerase, it only adds poly(A) to selected cytoplasmic mRNAs. Required for localization of mRNAs to both poles of the egg, to recruit or maintain known centrosomal proteins with two types of microtubule organizing centers (MTOCs): the central MTOC that forms between the meiosis II tandem spindles and the centrosomes of the mitotic spindle. Required at the final stage of oogenesis for meiosis I metaphase arrest and for progression beyond this stage. Functions with the RNA-binding protein Dcr-2 to promote cytoplasmic polyadenylation and translational activation of certain mRNAs such as Tl and r2d2. As a consequence, is involved in regulating Toll immune signaling and promoting resistance to fungal infection. The protein is Poly(A) RNA polymerase gld-2 homolog B (wisp) of Drosophila melanogaster (Fruit fly).